The sequence spans 298 residues: GTPase Era (298 aa).

The Era-type G domain maps to 3–170 (KSGFVTIVGR…VELMKKAMPE (168 aa)). The interval 11-18 (GRPNVGKS) is G1. 11 to 18 (GRPNVGKS) contacts GTP. Positions 37 to 41 (QTTRN) are G2. The interval 58–61 (DTPG) is G3. GTP-binding positions include 58–62 (DTPGI) and 120–123 (NKVD). Residues 120 to 123 (NKVD) are G4. The G5 stretch occupies residues 149 to 151 (ISA). One can recognise a KH type-2 domain in the interval 201-278 (LRDEVPHGIA…NLKIWVKVRK (78 aa)).

The protein belongs to the TRAFAC class TrmE-Era-EngA-EngB-Septin-like GTPase superfamily. Era GTPase family. In terms of assembly, monomer.

The protein localises to the cytoplasm. It localises to the cell membrane. An essential GTPase that binds both GDP and GTP, with rapid nucleotide exchange. Plays a role in 16S rRNA processing and 30S ribosomal subunit biogenesis and possibly also in cell cycle regulation and energy metabolism. This chain is GTPase Era, found in Clostridium beijerinckii (strain ATCC 51743 / NCIMB 8052) (Clostridium acetobutylicum).